We begin with the raw amino-acid sequence, 232 residues long: Large ribosomal subunit protein uL1 (232 aa).

The protein belongs to the universal ribosomal protein uL1 family. Part of the 50S ribosomal subunit.

Binds directly to 23S rRNA. The L1 stalk is quite mobile in the ribosome, and is involved in E site tRNA release. In terms of biological role, protein L1 is also a translational repressor protein, it controls the translation of the L11 operon by binding to its mRNA. The protein is Large ribosomal subunit protein uL1 of Chlamydia trachomatis serovar D (strain ATCC VR-885 / DSM 19411 / UW-3/Cx).